A 307-amino-acid polypeptide reads, in one-letter code: Ribosomal protein L11 methyltransferase (307 aa).

Residues Thr-154, Gly-178, Asp-200, and Asn-242 each contribute to the S-adenosyl-L-methionine site.

The protein belongs to the methyltransferase superfamily. PrmA family.

The protein localises to the cytoplasm. The catalysed reaction is L-lysyl-[protein] + 3 S-adenosyl-L-methionine = N(6),N(6),N(6)-trimethyl-L-lysyl-[protein] + 3 S-adenosyl-L-homocysteine + 3 H(+). In terms of biological role, methylates ribosomal protein L11. This is Ribosomal protein L11 methyltransferase from Syntrophotalea carbinolica (strain DSM 2380 / NBRC 103641 / GraBd1) (Pelobacter carbinolicus).